Here is a 378-residue protein sequence, read N- to C-terminus: MPSLQDYHVPYPAAAPGQVRKVIYLPQQNPTVEQQHLRVQIIPGRHENCEDGRLYKLTGSVTEETLQGWGYSYYVVKLGDIYAAHRSSSDPARVTTFVALDENPVIAYNSKLPIVVYVPEGAELRYRVWTDDTSLVQSIQQQPEAPALPQPHLVPVTERQECPHELPRCGAPGEYVTQDCKTSMLSVEEVHRLSSSTPPLIPSAVRGSAHEAHAAPPLHSAELEERVCPVMEHLEVCPQNNGHEGREQPAEEASTLKRRSSSSSSSNPRHHSANEPSPSRPRLSSTEYWPHENSKTKRSPSATHKPRRSTDSAAIEEAGVGAPKKNRSSSSSASSKRKAEDNVYEKTMKNFWNRARSDSPRKASASSKKSGNGSKADP.

Disordered regions lie at residues H191–P216 and P238–P378. Polar residues predominate over residues N274–E287. Over residues R337–M348 the composition is skewed to basic and acidic residues. Residues K362–P378 show a composition bias toward low complexity.

It belongs to the protease inhibitor I11 (ecotin) family.

The polypeptide is Ecotin-like protein 3 (Leishmania infantum).